Consider the following 85-residue polypeptide: uncharacterized protein (85 aa).

The next 2 membrane-spanning stretches (helical) occupy residues 13-35 (KWLA…FQPL) and 59-81 (EGIV…HLLL).

The protein resides in the cell membrane. This is an uncharacterized protein from Archaeoglobus fulgidus (strain ATCC 49558 / DSM 4304 / JCM 9628 / NBRC 100126 / VC-16).